We begin with the raw amino-acid sequence, 971 residues long: Exportin-2 (971 aa).

An Importin N-terminal domain is found at 29-102; sequence AEKYLESVEG…KSSIINLMLR (74 aa).

The protein belongs to the XPO2/CSE1 family.

The protein localises to the cytoplasm. It localises to the nucleus. Export receptor for importin alpha. Mediates importin-alpha re-export from the nucleus to the cytoplasm after import substrates have been released into the nucleoplasm. The protein is Exportin-2 (cse1l) of Xenopus laevis (African clawed frog).